A 604-amino-acid polypeptide reads, in one-letter code: Probable translation initiation factor IF-2 (604 aa).

The region spanning 18–232 is the tr-type G domain; the sequence is IRTPIVCVLG…VLIGLAQRYM (215 aa). The segment at 27 to 34 is G1; the sequence is GHVDHGKT. 27-34 contacts GTP; that stretch reads GHVDHGKT. Residues 52–56 are G2; the sequence is AITQH. The interval 88–91 is G3; the sequence is DTPG. GTP is bound by residues 88–92 and 142–145; these read DTPGH and TKLD. The segment at 142 to 145 is G4; that stretch reads TKLD. A G5 region spans residues 210–212; the sequence is SAH.

The protein belongs to the TRAFAC class translation factor GTPase superfamily. Classic translation factor GTPase family. IF-2 subfamily.

Function in general translation initiation by promoting the binding of the formylmethionine-tRNA to ribosomes. Seems to function along with eIF-2. This is Probable translation initiation factor IF-2 from Methanospirillum hungatei JF-1 (strain ATCC 27890 / DSM 864 / NBRC 100397 / JF-1).